The following is an 819-amino-acid chain: MDTEGFGELLQQAEQLAAETEGISELPHVERNLQEIQQAGERLRSRTLTRTSQETADVKASVLLGSRGLDISHISQRLESLSAATTFEPLEPVKDTDIQGFLKNEKDNALLSAIEESRKRTFGMAEEYHRESMLVEWEQVKQRILHTLLASGEDALDFTQESEPSYISDVGPPGRSSLDNIEMAYARQIYIYNEKIVNGHLQPNLVDLCASVAELDDKSISDMWTMVKQMTDVLLTPATDALKNRSSVEVRMEFVRQALAYLEQSYKNYTLVTVFGNLHQAQLGGVPGTYQLVRSFLNIKLPAPLPGLQDGEVEGHPVWALIYYCMRCGDLLAASQVVNRAQHQLGEFKTWFQEYMNSKDRRLSPATENKLRLHYRRALRNNTDPYKRAVYCIIGRCDVTDNQSEVADKTEDYLWLKLNQVCFDDDGTSSPQDRLTLSQFQKQLLEDYGESHFTVNQQPFLYFQVLFLTAQFEAAVAFLFRMERLRCHAVHVALVLFELKLLLKSSGQSAQLLSHEPGDPPCLRRLNFVRLLMLYTRKFESTDPREALQYFYFLRDEKDSQGENMFLRCVSELVIESREFDMILGKLENDGSRKPGVIDKFTSDTKPIINKVASVAENKGLFEEAAKLYDLAKNADKVLELMNKLLSPVVPQISAPQSNKERLKNMALSIAERYRAQGISANKFVDSTFYLLLDLITFFDEYHSGHIDRAFDIIERLKLVPLNQESVEERVAAFRNFSDEIRHNLSEVLLATMNILFTQFKRLKGTSPSSSSRPQRVIEDRDSQLRSQARTLITFAGMIPYRTSGDTNARLVQMEVLMN.

Phosphothreonine is present on Thr-49. Phosphoserine is present on residues Ser-52, Ser-66, Ser-72, Ser-75, Ser-80, Ser-430, and Ser-767.

Belongs to the nucleoporin interacting component (NIC) family. As to quaternary structure, part of the nuclear pore complex (NPC). Component of the p62 complex, a complex composed of NUP62 and NUP54. Forms a complex with NUP35, NUP155, NUP205 and lamin B; the interaction with NUP35 is direct. Does not interact with TPR. Interacts with SMAD4 and IPO7; translocates SMAD4 to the nucleus through the NPC upon BMP7 stimulation resulting in activation of SMAD4 signaling. In terms of assembly, (Microbial infection) Interacts with SARS-CoV translation inhibitor nsp1; this interaction may disrupt nuclear pore function.

It localises to the nucleus membrane. The protein resides in the nucleus. The protein localises to the nuclear pore complex. It is found in the nucleus envelope. Plays a role in the nuclear pore complex (NPC) assembly and/or maintenance. May anchor nucleoporins, but not NUP153 and TPR, to the NPC. During renal development, regulates podocyte migration and proliferation through SMAD4 signaling. In Homo sapiens (Human), this protein is Nuclear pore complex protein Nup93 (NUP93).